Consider the following 1133-residue polypeptide: Nuclear pore complex-interacting protein family member B5 (1133 aa).

Residues 60–84 (WLHVIIAFPTSYKVVITLWIVYLWV) form a helical membrane-spanning segment. 3 disordered regions span residues 241–262 (NRMG…NSLS), 290–575 (LTPL…IKTP), and 868–1133 (ERLR…RRLS). Residues 252–262 (QQHSITDNSLS) are compositionally biased toward polar residues. Over residues 349 to 359 (PLPPSALPSAP) the composition is skewed to pro residues. Basic and acidic residues-rich tracts occupy residues 406-416 (DNIKTPAERLR), 448-458 (DNIKTPAERLR), 490-500 (DNIKTPAERLR), 528-538 (DNIKTPAERLR), 903-913 (DNIKTPAERLR), 945-955 (DNIKTPAERLR), and 987-997 (DNIKTPAERLR).

The protein belongs to the NPIP family.

The protein resides in the membrane. This is Nuclear pore complex-interacting protein family member B5 (NPIPB5) from Homo sapiens (Human).